Here is a 115-residue protein sequence, read N- to C-terminus: Large ribosomal subunit protein bL19 (115 aa).

The protein belongs to the bacterial ribosomal protein bL19 family.

Functionally, this protein is located at the 30S-50S ribosomal subunit interface and may play a role in the structure and function of the aminoacyl-tRNA binding site. This is Large ribosomal subunit protein bL19 from Desulforamulus reducens (strain ATCC BAA-1160 / DSM 100696 / MI-1) (Desulfotomaculum reducens).